The primary structure comprises 455 residues: Bifunctional protein GlmU (455 aa).

Residues Met1–Arg230 form a pyrophosphorylase region. UDP-N-acetyl-alpha-D-glucosamine contacts are provided by residues Leu9–Gly12, Lys23, Gln73, Gly78–Thr79, Ser101–Asp103, Gly140, Glu155, Asn170, and Asn228. Mg(2+) is bound at residue Asp103. Residue Asn228 coordinates Mg(2+). The segment at Ser231–Asp251 is linker. Positions Gly252–Trp455 are N-acetyltransferase. Residues Arg333 and Lys351 each contribute to the UDP-N-acetyl-alpha-D-glucosamine site. His363 serves as the catalytic Proton acceptor. Residues Tyr366 and Asn377 each coordinate UDP-N-acetyl-alpha-D-glucosamine. Acetyl-CoA is bound by residues Asn386–Tyr387, Ser405, Ala423, and Arg440.

It in the N-terminal section; belongs to the N-acetylglucosamine-1-phosphate uridyltransferase family. The protein in the C-terminal section; belongs to the transferase hexapeptide repeat family. As to quaternary structure, homotrimer. The cofactor is Mg(2+).

The protein resides in the cytoplasm. The catalysed reaction is alpha-D-glucosamine 1-phosphate + acetyl-CoA = N-acetyl-alpha-D-glucosamine 1-phosphate + CoA + H(+). It catalyses the reaction N-acetyl-alpha-D-glucosamine 1-phosphate + UTP + H(+) = UDP-N-acetyl-alpha-D-glucosamine + diphosphate. It participates in nucleotide-sugar biosynthesis; UDP-N-acetyl-alpha-D-glucosamine biosynthesis; N-acetyl-alpha-D-glucosamine 1-phosphate from alpha-D-glucosamine 6-phosphate (route II): step 2/2. It functions in the pathway nucleotide-sugar biosynthesis; UDP-N-acetyl-alpha-D-glucosamine biosynthesis; UDP-N-acetyl-alpha-D-glucosamine from N-acetyl-alpha-D-glucosamine 1-phosphate: step 1/1. The protein operates within bacterial outer membrane biogenesis; LPS lipid A biosynthesis. Its function is as follows. Catalyzes the last two sequential reactions in the de novo biosynthetic pathway for UDP-N-acetylglucosamine (UDP-GlcNAc). The C-terminal domain catalyzes the transfer of acetyl group from acetyl coenzyme A to glucosamine-1-phosphate (GlcN-1-P) to produce N-acetylglucosamine-1-phosphate (GlcNAc-1-P), which is converted into UDP-GlcNAc by the transfer of uridine 5-monophosphate (from uridine 5-triphosphate), a reaction catalyzed by the N-terminal domain. The protein is Bifunctional protein GlmU of Limosilactobacillus fermentum (strain NBRC 3956 / LMG 18251) (Lactobacillus fermentum).